Here is a 474-residue protein sequence, read N- to C-terminus: Ribulose bisphosphate carboxylase/oxygenase activase, chloroplastic (474 aa).

A chloroplast-targeting transit peptide spans 1–58 (MAAAVSTVGAINRAPLSLNGSGSGAVSAPASTFLGKKVVTVSRFAQSNKKSNGSFKVL). The residue at position 78 (Thr78) is a Phosphothreonine; by CK2. 165-172 (GGKGQGKS) serves as a coordination point for ATP. Residue Thr283 is modified to Phosphothreonine.

The protein belongs to the RuBisCO activase family. Post-translationally, phosphorylated at Thr-78 by CK2.

Its subcellular location is the plastid. It localises to the chloroplast stroma. The protein resides in the chloroplast. The protein localises to the plastoglobule. Activation of RuBisCO (ribulose-1,5-bisphosphate carboxylase/oxygenase; EC 4.1.1.39) involves the ATP-dependent carboxylation of the epsilon-amino group of lysine leading to a carbamate structure. The sequence is that of Ribulose bisphosphate carboxylase/oxygenase activase, chloroplastic (RCA) from Arabidopsis thaliana (Mouse-ear cress).